Consider the following 83-residue polypeptide: RNA-binding protein Hfq (83 aa).

Positions 10–70 (DAFLNQLRKE…ISTVSPSRPV (61 aa)) constitute a Sm domain.

This sequence belongs to the Hfq family. In terms of assembly, homohexamer.

Functionally, RNA chaperone that binds small regulatory RNA (sRNAs) and mRNAs to facilitate mRNA translational regulation in response to envelope stress, environmental stress and changes in metabolite concentrations. Also binds with high specificity to tRNAs. The protein is RNA-binding protein Hfq of Desulforudis audaxviator (strain MP104C).